The sequence spans 383 residues: Queuine tRNA-ribosyltransferase (383 aa).

Asp92 functions as the Proton acceptor in the catalytic mechanism. Residues 92–96, Asp146, Gln190, and Gly217 contribute to the substrate site; that span reads DSGGF. Residues 248-254 form an RNA binding region; the sequence is GVGKPED. The active-site Nucleophile is Asp267. An RNA binding; important for wobble base 34 recognition region spans residues 272 to 276; that stretch reads TRNAR. Cys310, Cys312, Cys315, and His341 together coordinate Zn(2+).

This sequence belongs to the queuine tRNA-ribosyltransferase family. Homodimer. Within each dimer, one monomer is responsible for RNA recognition and catalysis, while the other monomer binds to the replacement base PreQ1. Zn(2+) is required as a cofactor.

It catalyses the reaction 7-aminomethyl-7-carbaguanine + guanosine(34) in tRNA = 7-aminomethyl-7-carbaguanosine(34) in tRNA + guanine. It participates in tRNA modification; tRNA-queuosine biosynthesis. Catalyzes the base-exchange of a guanine (G) residue with the queuine precursor 7-aminomethyl-7-deazaguanine (PreQ1) at position 34 (anticodon wobble position) in tRNAs with GU(N) anticodons (tRNA-Asp, -Asn, -His and -Tyr). Catalysis occurs through a double-displacement mechanism. The nucleophile active site attacks the C1' of nucleotide 34 to detach the guanine base from the RNA, forming a covalent enzyme-RNA intermediate. The proton acceptor active site deprotonates the incoming PreQ1, allowing a nucleophilic attack on the C1' of the ribose to form the product. After dissociation, two additional enzymatic reactions on the tRNA convert PreQ1 to queuine (Q), resulting in the hypermodified nucleoside queuosine (7-(((4,5-cis-dihydroxy-2-cyclopenten-1-yl)amino)methyl)-7-deazaguanosine). The chain is Queuine tRNA-ribosyltransferase from Psychrobacter sp. (strain PRwf-1).